A 297-amino-acid polypeptide reads, in one-letter code: Phosphoribosylaminoimidazole-succinocarboxamide synthase (297 aa).

The protein belongs to the SAICAR synthetase family.

It carries out the reaction 5-amino-1-(5-phospho-D-ribosyl)imidazole-4-carboxylate + L-aspartate + ATP = (2S)-2-[5-amino-1-(5-phospho-beta-D-ribosyl)imidazole-4-carboxamido]succinate + ADP + phosphate + 2 H(+). The protein operates within purine metabolism; IMP biosynthesis via de novo pathway; 5-amino-1-(5-phospho-D-ribosyl)imidazole-4-carboxamide from 5-amino-1-(5-phospho-D-ribosyl)imidazole-4-carboxylate: step 1/2. The protein is Phosphoribosylaminoimidazole-succinocarboxamide synthase of Methylococcus capsulatus (strain ATCC 33009 / NCIMB 11132 / Bath).